The primary structure comprises 317 residues: Glutathione synthetase (317 aa).

The 187-residue stretch at 125-311 folds into the ATP-grasp domain; that stretch reads EKMFATLFPQ…IGGKLMDAID (187 aa). 152 to 208 provides a ligand contact to ATP; sequence TAKHADVILKPLDGMGGTSIFRHRAGDPNLSVILETLTALGTQQIMAQAYLPAIKDG. Mg(2+) is bound by residues glutamate 282 and asparagine 284.

This sequence belongs to the prokaryotic GSH synthase family. Requires Mg(2+) as cofactor. The cofactor is Mn(2+).

It carries out the reaction gamma-L-glutamyl-L-cysteine + glycine + ATP = glutathione + ADP + phosphate + H(+). The protein operates within sulfur metabolism; glutathione biosynthesis; glutathione from L-cysteine and L-glutamate: step 2/2. This is Glutathione synthetase from Pseudomonas putida (strain ATCC 47054 / DSM 6125 / CFBP 8728 / NCIMB 11950 / KT2440).